The primary structure comprises 417 residues: Tyrosine--tRNA ligase (417 aa).

L-tyrosine is bound at residue tyrosine 39. The short motif at 44–53 (PTAASLHAGG) is the 'HIGH' region element. L-tyrosine is bound by residues tyrosine 176 and glutamine 180. Positions 236-240 (KMGKS) match the 'KMSKS' region motif. Lysine 239 is an ATP binding site. Residues 350 to 417 (LGLLTLLVRA…KKKHLLVRPV (68 aa)) form the S4 RNA-binding domain.

Belongs to the class-I aminoacyl-tRNA synthetase family. TyrS type 1 subfamily. Homodimer.

Its subcellular location is the cytoplasm. The enzyme catalyses tRNA(Tyr) + L-tyrosine + ATP = L-tyrosyl-tRNA(Tyr) + AMP + diphosphate + H(+). Catalyzes the attachment of tyrosine to tRNA(Tyr) in a two-step reaction: tyrosine is first activated by ATP to form Tyr-AMP and then transferred to the acceptor end of tRNA(Tyr). The polypeptide is Tyrosine--tRNA ligase (Rhizobium meliloti (strain 1021) (Ensifer meliloti)).